A 240-amino-acid polypeptide reads, in one-letter code: T4 protein (240 aa).

The protein belongs to the poxviruses B9 family.

This is T4 protein from Sheeppox virus (strain InS-1) (SPPV).